Here is a 277-residue protein sequence, read N- to C-terminus: Formamidopyrimidine-DNA glycosylase (277 aa).

Pro-2 serves as the catalytic Schiff-base intermediate with DNA. The Proton donor role is filled by Glu-3. The active-site Proton donor; for beta-elimination activity is Lys-60. 3 residues coordinate DNA: His-94, Arg-113, and Arg-156. The segment at Lys-241–Lys-275 adopts an FPG-type zinc-finger fold. The Proton donor; for delta-elimination activity role is filled by Arg-265.

Belongs to the FPG family. In terms of assembly, monomer. Requires Zn(2+) as cofactor.

It carries out the reaction Hydrolysis of DNA containing ring-opened 7-methylguanine residues, releasing 2,6-diamino-4-hydroxy-5-(N-methyl)formamidopyrimidine.. It catalyses the reaction 2'-deoxyribonucleotide-(2'-deoxyribose 5'-phosphate)-2'-deoxyribonucleotide-DNA = a 3'-end 2'-deoxyribonucleotide-(2,3-dehydro-2,3-deoxyribose 5'-phosphate)-DNA + a 5'-end 5'-phospho-2'-deoxyribonucleoside-DNA + H(+). Involved in base excision repair of DNA damaged by oxidation or by mutagenic agents. Acts as a DNA glycosylase that recognizes and removes damaged bases. Has a preference for oxidized purines, such as 7,8-dihydro-8-oxoguanine (8-oxoG). Has AP (apurinic/apyrimidinic) lyase activity and introduces nicks in the DNA strand. Cleaves the DNA backbone by beta-delta elimination to generate a single-strand break at the site of the removed base with both 3'- and 5'-phosphates. The protein is Formamidopyrimidine-DNA glycosylase of Desulforamulus reducens (strain ATCC BAA-1160 / DSM 100696 / MI-1) (Desulfotomaculum reducens).